The chain runs to 858 residues: Leucine--tRNA ligase (858 aa).

Positions 42–52 match the 'HIGH' region motif; sequence PYPSGRLHMGH. The 'KMSKS' region signature appears at 618-622; that stretch reads KMSKS. K621 lines the ATP pocket.

This sequence belongs to the class-I aminoacyl-tRNA synthetase family.

The protein localises to the cytoplasm. It carries out the reaction tRNA(Leu) + L-leucine + ATP = L-leucyl-tRNA(Leu) + AMP + diphosphate. This is Leucine--tRNA ligase from Photobacterium profundum (strain SS9).